The following is a 204-amino-acid chain: Transcriptional regulator GfcR (204 aa).

This sequence belongs to the purine/pyrimidine phosphoribosyltransferase family. GfcR subfamily.

The sequence is that of Transcriptional regulator GfcR from Methanoculleus marisnigri (strain ATCC 35101 / DSM 1498 / JR1).